Here is a 421-residue protein sequence, read N- to C-terminus: Polymerase delta-interacting protein 3 (421 aa).

A2 bears the N-acetylalanine mark. S5 carries the post-translational modification Phosphoserine. R33 is modified (omega-N-methylarginine). Phosphoserine is present on residues S44 and S127. At T140 the chain carries Phosphothreonine. A Glycyl lysine isopeptide (Lys-Gly) (interchain with G-Cter in SUMO2) cross-link involves residue K200. S204, S215, and S217 each carry phosphoserine. A Glycyl lysine isopeptide (Lys-Gly) (interchain with G-Cter in SUMO2) cross-link involves residue K223. S244 is subject to Phosphoserine. K248 participates in a covalent cross-link: Glycyl lysine isopeptide (Lys-Gly) (interchain with G-Cter in SUMO2). A Phosphoserine modification is found at S275. Residues 280-351 (TKMTVNNLHP…QPMKCNLHMN (72 aa)) enclose the RRM domain. Residues 370–379 (SMKKESELPR) are compositionally biased toward basic and acidic residues. Positions 370–393 (SMKKESELPRRVNSASSSNPPAEV) are disordered. A Glycyl lysine isopeptide (Lys-Gly) (interchain with G-Cter in SUMO2) cross-link involves residue K372. Phosphoserine; by RPS6KB1 is present on residues S383 and S385. K418 participates in a covalent cross-link: Glycyl lysine isopeptide (Lys-Gly) (interchain with G-Cter in SUMO2).

Interacts with POLD2. Interacts with NCBP1 and EIF4A3. Associates with the multiprotein exon junction complex (EJC). Interacts with RPS6KB1 (activated). Interacts with ERH. Interacts with THOC2, DDX39B and ZC3H11A; the interactions are ATP-dependent and indicative for an association with the TREX complex. In terms of processing, phosphorylated at Ser-383 and Ser-385 by RPS6KB1.

It is found in the nucleus. The protein localises to the nucleus speckle. The protein resides in the cytoplasm. Is involved in regulation of translation. Is preferentially associated with CBC-bound spliced mRNA-protein complexes during the pioneer round of mRNA translation. Contributes to enhanced translational efficiency of spliced over nonspliced mRNAs. Recruits activated ribosomal protein S6 kinase beta-1 I/RPS6KB1 to newly synthesized mRNA. Involved in nuclear mRNA export; probably mediated by association with the TREX complex. The chain is Polymerase delta-interacting protein 3 (POLDIP3) from Homo sapiens (Human).